Reading from the N-terminus, the 293-residue chain is Phosphatidylglycerol--prolipoprotein diacylglyceryl transferase (293 aa).

A run of 4 helical transmembrane segments spans residues 4-24 (ILAFLSIAAGSTLFFVFLFIF), 45-65 (FELRWYSTLILTGFLISYFVA), 81-101 (ELIFYGVIAGIVGARLYYVLF), and 115-135 (IWEGGLAIHGAVIGALLTGFL). Position 165 (Arg-165) interacts with a 1,2-diacyl-sn-glycero-3-phospho-(1'-sn-glycerol). A run of 3 helical transmembrane segments spans residues 204-224 (PTFLYESIWDLLVFFMLSVYF), 231-249 (HGEVTCLYFVLYSLGRIVI), and 262-282 (IKAAQLLSAVLILLGFTGFLI).

This sequence belongs to the Lgt family.

Its subcellular location is the cell inner membrane. It catalyses the reaction L-cysteinyl-[prolipoprotein] + a 1,2-diacyl-sn-glycero-3-phospho-(1'-sn-glycerol) = an S-1,2-diacyl-sn-glyceryl-L-cysteinyl-[prolipoprotein] + sn-glycerol 1-phosphate + H(+). The protein operates within protein modification; lipoprotein biosynthesis (diacylglyceryl transfer). Its function is as follows. Catalyzes the transfer of the diacylglyceryl group from phosphatidylglycerol to the sulfhydryl group of the N-terminal cysteine of a prolipoprotein, the first step in the formation of mature lipoproteins. This Thermotoga petrophila (strain ATCC BAA-488 / DSM 13995 / JCM 10881 / RKU-1) protein is Phosphatidylglycerol--prolipoprotein diacylglyceryl transferase.